The following is a 190-amino-acid chain: Xanthine phosphoribosyltransferase (190 aa).

Xanthine is bound by residues leucine 20 and asparagine 27. 128–132 (ANGKA) serves as a coordination point for 5-phospho-alpha-D-ribose 1-diphosphate. Lysine 156 contacts xanthine.

The protein belongs to the purine/pyrimidine phosphoribosyltransferase family. Xpt subfamily. As to quaternary structure, homodimer.

The protein resides in the cytoplasm. It carries out the reaction XMP + diphosphate = xanthine + 5-phospho-alpha-D-ribose 1-diphosphate. The protein operates within purine metabolism; XMP biosynthesis via salvage pathway; XMP from xanthine: step 1/1. Its function is as follows. Converts the preformed base xanthine, a product of nucleic acid breakdown, to xanthosine 5'-monophosphate (XMP), so it can be reused for RNA or DNA synthesis. The protein is Xanthine phosphoribosyltransferase of Ruminiclostridium cellulolyticum (strain ATCC 35319 / DSM 5812 / JCM 6584 / H10) (Clostridium cellulolyticum).